The primary structure comprises 367 residues: Protein RecA (367 aa).

ATP is bound at residue Gly-73–Thr-80. The disordered stretch occupies residues Asp-345–Glu-367.

It belongs to the RecA family.

Its subcellular location is the cytoplasm. Can catalyze the hydrolysis of ATP in the presence of single-stranded DNA, the ATP-dependent uptake of single-stranded DNA by duplex DNA, and the ATP-dependent hybridization of homologous single-stranded DNAs. It interacts with LexA causing its activation and leading to its autocatalytic cleavage. The polypeptide is Protein RecA (Herminiimonas arsenicoxydans).